A 201-amino-acid chain; its full sequence is Large ribosomal subunit protein uL4 (201 aa).

The disordered stretch occupies residues 45–67; the sequence is AQKTRAEVTGSGKKPWRQKGTGR.

It belongs to the universal ribosomal protein uL4 family. Part of the 50S ribosomal subunit.

Its function is as follows. One of the primary rRNA binding proteins, this protein initially binds near the 5'-end of the 23S rRNA. It is important during the early stages of 50S assembly. It makes multiple contacts with different domains of the 23S rRNA in the assembled 50S subunit and ribosome. Forms part of the polypeptide exit tunnel. The protein is Large ribosomal subunit protein uL4 of Yersinia enterocolitica serotype O:8 / biotype 1B (strain NCTC 13174 / 8081).